The primary structure comprises 360 residues: Bifunctional protein FolD 4, chloroplastic (360 aa).

Residues 1-51 (MASMMFTDCSSTTTSRLIHLNRSSGTFLLRQCVGQLRLQTTASGRGCCIRS) constitute a chloroplast transit peptide. Ser52 is subject to N-acetylserine.

It belongs to the tetrahydrofolate dehydrogenase/cyclohydrolase family. As to quaternary structure, homodimer.

The protein resides in the plastid. It is found in the chloroplast. It carries out the reaction (6R)-5,10-methylene-5,6,7,8-tetrahydrofolate + NADP(+) = (6R)-5,10-methenyltetrahydrofolate + NADPH. The enzyme catalyses (6R)-5,10-methenyltetrahydrofolate + H2O = (6R)-10-formyltetrahydrofolate + H(+). It participates in one-carbon metabolism; tetrahydrofolate interconversion. In terms of biological role, catalyzes the oxidation of 5,10-methylenetetrahydrofolate to 5,10-methenyltetrahydrofolate and then the hydrolysis of 5,10-methenyltetrahydrofolate to 10-formyltetrahydrofolate. The chain is Bifunctional protein FolD 4, chloroplastic (FOLD4) from Arabidopsis thaliana (Mouse-ear cress).